The primary structure comprises 265 residues: tRNA (guanine-N(1)-)-methyltransferase (265 aa).

Residues Gly119 and 139 to 144 contribute to the S-adenosyl-L-methionine site; that span reads IGDYVL.

The protein belongs to the RNA methyltransferase TrmD family. As to quaternary structure, homodimer.

It is found in the cytoplasm. The enzyme catalyses guanosine(37) in tRNA + S-adenosyl-L-methionine = N(1)-methylguanosine(37) in tRNA + S-adenosyl-L-homocysteine + H(+). Specifically methylates guanosine-37 in various tRNAs. The sequence is that of tRNA (guanine-N(1)-)-methyltransferase from Alcanivorax borkumensis (strain ATCC 700651 / DSM 11573 / NCIMB 13689 / SK2).